The chain runs to 294 residues: 33 kDa chaperonin (294 aa).

Cystine bridges form between cysteine 235-cysteine 237 and cysteine 268-cysteine 271.

This sequence belongs to the HSP33 family. Post-translationally, under oxidizing conditions two disulfide bonds are formed involving the reactive cysteines. Under reducing conditions zinc is bound to the reactive cysteines and the protein is inactive.

Its subcellular location is the cytoplasm. In terms of biological role, redox regulated molecular chaperone. Protects both thermally unfolding and oxidatively damaged proteins from irreversible aggregation. Plays an important role in the bacterial defense system toward oxidative stress. This Proteus mirabilis (strain HI4320) protein is 33 kDa chaperonin.